The chain runs to 367 residues: Aminomethyltransferase (367 aa).

This sequence belongs to the GcvT family. In terms of assembly, the glycine cleavage system is composed of four proteins: P, T, L and H.

It catalyses the reaction N(6)-[(R)-S(8)-aminomethyldihydrolipoyl]-L-lysyl-[protein] + (6S)-5,6,7,8-tetrahydrofolate = N(6)-[(R)-dihydrolipoyl]-L-lysyl-[protein] + (6R)-5,10-methylene-5,6,7,8-tetrahydrofolate + NH4(+). Its function is as follows. The glycine cleavage system catalyzes the degradation of glycine. This Lysinibacillus sphaericus (strain C3-41) protein is Aminomethyltransferase.